A 667-amino-acid chain; its full sequence is Probable endo-1,3(4)-beta-glucanase AFLA_105200 (667 aa).

The N-terminal stretch at 1 to 24 (MSSSSFVWTVGSIALSSLITPTIA) is a signal peptide. Residues 25 to 288 (DGSGSRYQLT…WAGGVFGDSG (264 aa)) form the GH16 domain. N63 is a glycosylation site (N-linked (GlcNAc...) asparagine). Residue E144 is the Nucleophile of the active site. Catalysis depends on E149, which acts as the Proton donor. Polar residues-rich tracts occupy residues 354–363 (VPSVTSTPIL) and 379–394 (ATSS…QTSV). Disordered stretches follow at residues 354–427 (VPSV…ADAV) and 448–646 (GTIQ…AGAS). Low complexity-rich tracts occupy residues 395–427 (AGAE…ADAV), 448–483 (GTIQ…SQEP), and 574–622 (APTS…EATA). Over residues 623-637 (PTETDSGASTGTNPE) the composition is skewed to polar residues. G644 carries the GPI-anchor amidated glycine lipid modification. Positions 645–667 (ASKSVGISGLAGIVCGIAMAMLA) are cleaved as a propeptide — removed in mature form.

The protein belongs to the glycosyl hydrolase 16 family.

Its subcellular location is the cell membrane. It carries out the reaction Endohydrolysis of (1-&gt;3)- or (1-&gt;4)-linkages in beta-D-glucans when the glucose residue whose reducing group is involved in the linkage to be hydrolyzed is itself substituted at C-3.. In terms of biological role, mixed-linked glucanase involved in the degradation of complex natural cellulosic substrates. This is Probable endo-1,3(4)-beta-glucanase AFLA_105200 from Aspergillus flavus (strain ATCC 200026 / FGSC A1120 / IAM 13836 / NRRL 3357 / JCM 12722 / SRRC 167).